A 305-amino-acid chain; its full sequence is UDP-3-O-acyl-N-acetylglucosamine deacetylase (305 aa).

Positions 79, 238, and 242 each coordinate Zn(2+). Residue His-265 is the Proton donor of the active site.

It belongs to the LpxC family. Zn(2+) is required as a cofactor.

It carries out the reaction a UDP-3-O-[(3R)-3-hydroxyacyl]-N-acetyl-alpha-D-glucosamine + H2O = a UDP-3-O-[(3R)-3-hydroxyacyl]-alpha-D-glucosamine + acetate. It functions in the pathway glycolipid biosynthesis; lipid IV(A) biosynthesis; lipid IV(A) from (3R)-3-hydroxytetradecanoyl-[acyl-carrier-protein] and UDP-N-acetyl-alpha-D-glucosamine: step 2/6. Its function is as follows. Catalyzes the hydrolysis of UDP-3-O-myristoyl-N-acetylglucosamine to form UDP-3-O-myristoylglucosamine and acetate, the committed step in lipid A biosynthesis. This chain is UDP-3-O-acyl-N-acetylglucosamine deacetylase, found in Edwardsiella ictaluri (strain 93-146).